The chain runs to 90 residues: uncharacterized protein (90 aa).

This is an uncharacterized protein from Aedes vexans (Inland floodwater mosquito).